We begin with the raw amino-acid sequence, 473 residues long: Mitochondrial adenyl nucleotide antiporter SLC25A24-B (473 aa).

Residues methionine 1–aspartate 173 form a regulatory N-terminal domain region. The Mitochondrial intermembrane segment spans residues methionine 1–glutamine 197. EF-hand domains are found at residues aspartate 19–glutamate 54, valine 55–glutamate 88, glutamate 86–lysine 121, and isoleucine 122–aspartate 157. Residues aspartate 32, asparagine 34, aspartate 36, lysine 38, glutamate 43, aspartate 68, asparagine 70, aspartate 72, histidine 74, glutamate 79, aspartate 99, asparagine 101, aspartate 103, lysine 105, glutamate 110, aspartate 135, aspartate 137, threonine 139, threonine 141, and glutamate 146 each coordinate Ca(2+). Residues isoleucine 159–histidine 168 are linker region. The C-terminal transmembrane transporter domain stretch occupies residues isoleucine 174–isoleucine 473. Solcar repeat units lie at residues glycine 192 to leucine 277, leucine 285 to tyrosine 370, and proline 382 to glutamine 470. A helical membrane pass occupies residues leucine 198–leucine 215. Topologically, residues aspartate 216–arginine 251 are mitochondrial matrix. The chain crosses the membrane as a helical span at residues glycine 252–tyrosine 271. At glutamate 272–glycine 294 the chain is on the mitochondrial intermembrane side. The helical transmembrane segment at serine 295 to methionine 308 threads the bilayer. At glutamate 309 to lysine 344 the chain is on the mitochondrial matrix side. A helical membrane pass occupies residues glycine 345 to tyrosine 364. Residues glutamate 365–leucine 387 lie on the Mitochondrial intermembrane side of the membrane. Residues leucine 388–leucine 405 traverse the membrane as a helical segment. Residues alanine 406–arginine 444 lie on the Mitochondrial matrix side of the membrane. A helical membrane pass occupies residues glycine 445–tyrosine 464. At glutamate 465–isoleucine 473 the chain is on the mitochondrial intermembrane side.

It belongs to the mitochondrial carrier (TC 2.A.29) family. Monomer.

Its subcellular location is the mitochondrion inner membrane. It carries out the reaction Mg(2+)(out) + phosphate(in) + ATP(out) = Mg(2+)(in) + phosphate(out) + ATP(in). It catalyses the reaction ADP(out) + phosphate(in) + H(+)(out) = ADP(in) + phosphate(out) + H(+)(in). The enzyme catalyses AMP(out) + phosphate(in) = AMP(in) + phosphate(out). The catalysed reaction is phosphate(in) + ATP(out) + 2 H(+)(out) = phosphate(out) + ATP(in) + 2 H(+)(in). It carries out the reaction dADP(in) + ADP(out) = dADP(out) + ADP(in). It catalyses the reaction Mg(2+)(in) + ADP(out) + ATP(in) + H(+)(out) = Mg(2+)(out) + ADP(in) + ATP(out) + H(+)(in). The enzyme catalyses ADP(out) + diphosphate(in) = ADP(in) + diphosphate(out). The catalysed reaction is dAMP(in) + ADP(out) + H(+)(out) = dAMP(out) + ADP(in) + H(+)(in). It carries out the reaction 3'-AMP(in) + ADP(out) + H(+)(out) = 3'-AMP(out) + ADP(in) + H(+)(in). It catalyses the reaction dAMP(out) + phosphate(in) = dAMP(in) + phosphate(out). The enzyme catalyses 3'-AMP(out) + phosphate(in) = 3'-AMP(in) + phosphate(out). The catalysed reaction is dADP(out) + phosphate(in) + H(+)(out) = dADP(in) + phosphate(out) + H(+)(in). With respect to regulation, activated by an increase in cytosolic calcium levels that induce a conformational change of the N-terminal regulatory domain, uncapping the channel and allowing transport. Inhibited by bathophenanthroline, mersalyl, p-hydroxymercuribenzoate, bromcresol purple and tannic acid. In terms of biological role, electroneutral antiporter that mediates the transport of adenyl nucleotides through the inner mitochondrial membrane. Originally identified as an ATP-magnesium/inorganic phosphate antiporter, it also acts as a broad specificity adenyl nucleotide antiporter. By regulating the mitochondrial matrix adenyl nucleotide pool could adapt to changing cellular energetic demands and indirectly regulate adenyl nucleotide-dependent metabolic pathways. In Xenopus laevis (African clawed frog), this protein is Mitochondrial adenyl nucleotide antiporter SLC25A24-B (slc25a24-b).